The sequence spans 727 residues: Engulfment and cell motility protein 1 (727 aa).

The residue at position 18 (Tyr-18) is a Phosphotyrosine; by HCK. N6-acetyllysine occurs at positions 100 and 105. Tyr-216 is subject to Phosphotyrosine; by HCK. An ELMO domain is found at 319–492 (AQRDIIFELR…VVKEQVMRAL (174 aa)). Ser-344 is modified (phosphoserine). Residues Tyr-395 and Tyr-511 each carry the phosphotyrosine; by HCK modification. In terms of domain architecture, PH spans 555–676 (RLVEGTCFRK…DGLNALLGKD (122 aa)). The SH3-binding motif lies at 707–714 (PDAPPPIP). Phosphotyrosine; by HCK is present on Tyr-720.

In terms of assembly, interacts directly with the SH3-domain of DOCK1 via its SH3-binding site. Probably forms a heterotrimeric complex with DOCK1 and RAC1. Interacts with PLEKHG6. Interacts with HCK (via SH3 domain). Interacts with ADGRB1. Interacts with ADGRB3. Interacts with DOCK5. In terms of processing, phosphorylated by HCK.

It localises to the cytoplasm. It is found in the cell membrane. Involved in cytoskeletal rearrangements required for phagocytosis of apoptotic cells and cell motility. Acts in association with DOCK1 and CRK. Was initially proposed to be required in complex with DOCK1 to activate Rac Rho small GTPases. May enhance the guanine nucleotide exchange factor (GEF) activity of DOCK1. The polypeptide is Engulfment and cell motility protein 1 (Elmo1) (Mus musculus (Mouse)).